Here is a 345-residue protein sequence, read N- to C-terminus: Biotin synthase (345 aa).

In terms of domain architecture, Radical SAM core spans Arg-38 to Ala-256. 3 residues coordinate [4Fe-4S] cluster: Cys-53, Cys-57, and Cys-60. The [2Fe-2S] cluster site is built by Cys-97, Cys-128, Cys-188, and Arg-260.

It belongs to the radical SAM superfamily. Biotin synthase family. As to quaternary structure, homodimer. Requires [4Fe-4S] cluster as cofactor. The cofactor is [2Fe-2S] cluster.

The enzyme catalyses (4R,5S)-dethiobiotin + (sulfur carrier)-SH + 2 reduced [2Fe-2S]-[ferredoxin] + 2 S-adenosyl-L-methionine = (sulfur carrier)-H + biotin + 2 5'-deoxyadenosine + 2 L-methionine + 2 oxidized [2Fe-2S]-[ferredoxin]. Its pathway is cofactor biosynthesis; biotin biosynthesis; biotin from 7,8-diaminononanoate: step 2/2. In terms of biological role, catalyzes the conversion of dethiobiotin (DTB) to biotin by the insertion of a sulfur atom into dethiobiotin via a radical-based mechanism. This Pectobacterium atrosepticum (strain SCRI 1043 / ATCC BAA-672) (Erwinia carotovora subsp. atroseptica) protein is Biotin synthase.